A 339-amino-acid chain; its full sequence is Phosphate acyltransferase (339 aa).

The protein belongs to the PlsX family. Homodimer. Probably interacts with PlsY.

Its subcellular location is the cytoplasm. The enzyme catalyses a fatty acyl-[ACP] + phosphate = an acyl phosphate + holo-[ACP]. It participates in lipid metabolism; phospholipid metabolism. Catalyzes the reversible formation of acyl-phosphate (acyl-PO(4)) from acyl-[acyl-carrier-protein] (acyl-ACP). This enzyme utilizes acyl-ACP as fatty acyl donor, but not acyl-CoA. The protein is Phosphate acyltransferase of Helicobacter pylori (strain Shi470).